The primary structure comprises 308 residues: 1D-myo-inositol 2-acetamido-2-deoxy-alpha-D-glucopyranoside deacetylase (308 aa).

Zn(2+)-binding residues include His-37, Asp-40, and His-171.

The protein belongs to the MshB deacetylase family. The cofactor is Zn(2+).

The catalysed reaction is 1D-myo-inositol 2-acetamido-2-deoxy-alpha-D-glucopyranoside + H2O = 1D-myo-inositol 2-amino-2-deoxy-alpha-D-glucopyranoside + acetate. Its function is as follows. Catalyzes the deacetylation of 1D-myo-inositol 2-acetamido-2-deoxy-alpha-D-glucopyranoside (GlcNAc-Ins) in the mycothiol biosynthesis pathway. In Mycobacterium sp. (strain KMS), this protein is 1D-myo-inositol 2-acetamido-2-deoxy-alpha-D-glucopyranoside deacetylase.